The following is a 150-amino-acid chain: Large ribosomal subunit protein bL9 (150 aa).

It belongs to the bacterial ribosomal protein bL9 family.

Binds to the 23S rRNA. This chain is Large ribosomal subunit protein bL9, found in Pseudoalteromonas translucida (strain TAC 125).